The chain runs to 428 residues: GTPase Obg (428 aa).

The Obg domain occupies 1–158; it reads MFVDQVKIYV…RYVTLELKLL (158 aa). In terms of domain architecture, OBG-type G spans 159–329; the sequence is ADVGLVGFPS…LLFAIADLLE (171 aa). GTP contacts are provided by residues 165–172, 190–194, 212–215, 282–285, and 310–312; these read GFPSVGKS, FTTIV, DLPG, NKMD, and SAV. Ser-172 and Thr-192 together coordinate Mg(2+). The 79-residue stretch at 350 to 428 folds into the OCT domain; the sequence is KLEKEEAPFH…LLNYEFEFVD (79 aa).

Belongs to the TRAFAC class OBG-HflX-like GTPase superfamily. OBG GTPase family. Monomer. It depends on Mg(2+) as a cofactor.

The protein resides in the cytoplasm. Functionally, an essential GTPase which binds GTP, GDP and possibly (p)ppGpp with moderate affinity, with high nucleotide exchange rates and a fairly low GTP hydrolysis rate. Plays a role in control of the cell cycle, stress response, ribosome biogenesis and in those bacteria that undergo differentiation, in morphogenesis control. This Anoxybacillus flavithermus (strain DSM 21510 / WK1) protein is GTPase Obg.